We begin with the raw amino-acid sequence, 179 residues long: Large ribosomal subunit protein uL5 (179 aa).

The protein belongs to the universal ribosomal protein uL5 family. As to quaternary structure, part of the 50S ribosomal subunit; part of the 5S rRNA/L5/L18/L25 subcomplex. Contacts the 5S rRNA and the P site tRNA. Forms a bridge to the 30S subunit in the 70S ribosome.

Its function is as follows. This is one of the proteins that bind and probably mediate the attachment of the 5S RNA into the large ribosomal subunit, where it forms part of the central protuberance. In the 70S ribosome it contacts protein S13 of the 30S subunit (bridge B1b), connecting the 2 subunits; this bridge is implicated in subunit movement. Contacts the P site tRNA; the 5S rRNA and some of its associated proteins might help stabilize positioning of ribosome-bound tRNAs. The chain is Large ribosomal subunit protein uL5 from Xylella fastidiosa (strain 9a5c).